Here is a 268-residue protein sequence, read N- to C-terminus: Purine nucleoside phosphorylase (268 aa).

Residues Ser-36, His-68, 88 to 90 (RIH), and Ala-120 contribute to the phosphate site. Glu-189 serves as a coordination point for a purine D-ribonucleoside. Ser-208 serves as a coordination point for phosphate. Asn-231 is an a purine D-ribonucleoside binding site.

Belongs to the PNP/MTAP phosphorylase family. As to quaternary structure, homotrimer.

It catalyses the reaction a purine 2'-deoxy-D-ribonucleoside + phosphate = a purine nucleobase + 2-deoxy-alpha-D-ribose 1-phosphate. It participates in purine metabolism; purine nucleoside salvage. The purine nucleoside phosphorylases catalyze the phosphorolytic breakdown of the N-glycosidic bond in the beta-(deoxy)ribonucleoside molecules, with the formation of the corresponding free purine bases and pentose-1-phosphate. Cleaves guanosine, inosine, 2'-deoxyguanosine and 2'-deoxyinosine. The sequence is that of Purine nucleoside phosphorylase (punA) from Mycobacterium bovis (strain ATCC BAA-935 / AF2122/97).